The primary structure comprises 754 residues: MMSTYKRATLDEEDLVDSLSEGEVYPNGLQVNFRNFRSSQRCWATRTQVEKRLIVLVALLAAGLVACLTALGIQYRTRTPPVCLSEACVSVTSSILNSMNPTVDPCQDFFSYACGGWIKANPVPDGHSRWGAFSNLWEHNQAIIKHLLENSTASVSEAERKAQVYYRACMNETRIEELRAKPLMELIEKLGGWNITGPWAKDNFQDTLQVVTAHYRTSPFFSVYVSADSKNSNRNVIHVDQSGLGLPSRDYYLNKTENEKVLNGYLNYMVQLGKLLGGGDENAIRAQMQQILDFETALANITIPQEKRRDEELIYHKVTAAELQTLAPAINWLPFLNTIFYPVEINESEPIVVYDKEYLEQVSTLINTTDKCLLNNYMIWNLVRKTSSFLDQRFQDADEKFMEVMYGTKKTCLPRWKFCVSDTENNLGFGLGPMFVKATFAEDSKNIASEIILEIKKAFEESLSTLKWMDEDTRKSAKEKADAIYNMIGYPNFIMDPKELDKVFNDYTAVPDLYFENAMRFFNFSWRVTAEQLRKAPNRDQWSMTPPMVNAYYSPTKNEIVFPAGILPAPFYTRSSPKALNFGGIGVVVGHELTHAFDDQGREYDKDGNLRPWWKNSSVEAFKQQTECMVEQYSNYSVNGEPVNGRHTLGENIADNGGLKAAYRAYQNWVKKNGAEETLPTLGLTNNQLFFLGFAQVWCSVRTPESSHEGLITDPHSPSRFRVIGSLSNSKEFSEHFQCPPGSPMNPRHKCEVW.

The Cytoplasmic portion of the chain corresponds to 1 to 52 (MMSTYKRATLDEEDLVDSLSEGEVYPNGLQVNFRNFRSSQRCWATRTQVEKR). Thr-9 carries the post-translational modification Phosphothreonine. The chain crosses the membrane as a helical; Signal-anchor for type II membrane protein span at residues 53–73 (LIVLVALLAAGLVACLTALGI). Over 74–754 (QYRTRTPPVC…MNPRHKCEVW (681 aa)) the chain is Extracellular. Residues 82–754 (VCLSEACVSV…MNPRHKCEVW (673 aa)) enclose the Peptidase M13 domain. 5 disulfide bridges follow: Cys-83–Cys-88, Cys-106–Cys-739, Cys-114–Cys-699, Cys-169–Cys-419, and Cys-628–Cys-751. 8 N-linked (GlcNAc...) asparagine glycosylation sites follow: Asn-150, Asn-171, Asn-194, Asn-254, Asn-300, Asn-346, Asn-367, and Asn-523. His-591 lines the Zn(2+) pocket. Residue Glu-592 is part of the active site. Residue His-595 coordinates Zn(2+). N-linked (GlcNAc...) asparagine glycans are attached at residues Asn-616 and Asn-635. Zn(2+) is bound at residue Glu-651. The active-site Proton donor is Asp-655.

The protein belongs to the peptidase M13 family. In terms of assembly, homodimer; disulfide-linked. Interacts with PPP1R16B. Interacts with TSPAN8; this interaction recruits the endothelin converting enzyme ECE1 to tetraspanin-enriched microdomains and positively modulates its enzymatic activity. Zn(2+) is required as a cofactor.

The protein resides in the cell membrane. The catalysed reaction is Hydrolysis of the 21-Trp-|-Val-22 bond in big endothelin to form endothelin 1.. Its activity is regulated as follows. Inhibited by phosphoramidon. Its function is as follows. Converts big endothelin-1 to endothelin-1. The chain is Endothelin-converting enzyme 1 (ECE1) from Cavia porcellus (Guinea pig).